The sequence spans 333 residues: Low specificity L-threonine aldolase (333 aa).

An N6-(pyridoxal phosphate)lysine modification is found at Lys-197.

The protein belongs to the threonine aldolase family. Homotetramer. Pyridoxal 5'-phosphate is required as a cofactor.

It catalyses the reaction L-threonine = acetaldehyde + glycine. It carries out the reaction L-allo-threonine = acetaldehyde + glycine. Catalyzes the cleavage of L-allo-threonine and L-threonine to glycine and acetaldehyde. L-threo-phenylserine and L-erythro-phenylserine are also good substrates. The protein is Low specificity L-threonine aldolase (ltaE) of Escherichia coli (strain K12).